The primary structure comprises 397 residues: 2,6-dihydroxypyridine 3-monooxygenase (397 aa).

Residues 14-16 (SIS), 35-36 (ER), V49, L120, D306, and 316-320 (AAGGA) contribute to the FAD site.

Homodimer. FAD is required as a cofactor.

It carries out the reaction 2,6-dihydroxypyridine + NADH + O2 + H(+) = 2,3,6-trihydroxypyridine + NAD(+) + H2O. It participates in alkaloid degradation; nicotine degradation. Catalyzes the conversion of 2,6-dihydroxypyridine into 2,3,6-trihydroxypyridine in the nicotine degradation pathway. This Paenarthrobacter nicotinovorans (Arthrobacter nicotinovorans) protein is 2,6-dihydroxypyridine 3-monooxygenase (dhpH).